Consider the following 283-residue polypeptide: Glutamate racemase (283 aa).

Residues D7–S8 and Y39–G40 contribute to the substrate site. The Proton donor/acceptor role is filled by C70. Residue N71–T72 participates in substrate binding. C206 (proton donor/acceptor) is an active-site residue. T207–H208 provides a ligand contact to substrate.

The protein belongs to the aspartate/glutamate racemases family.

The enzyme catalyses L-glutamate = D-glutamate. Its pathway is cell wall biogenesis; peptidoglycan biosynthesis. Its function is as follows. Provides the (R)-glutamate required for cell wall biosynthesis. In Phenylobacterium zucineum (strain HLK1), this protein is Glutamate racemase.